Here is a 936-residue protein sequence, read N- to C-terminus: Aftiphilin (936 aa).

The interval 1–36 (MEPDIIRMYSSSPPPLDNGAEDDDDDEFGEFGGFSE) is disordered. The interval 1–523 (MEPDIIRMYS…ARKSSGTGTE (523 aa)) is interaction with AP1G1, AP1G2, GGA1 and GGA3. Residues 19–29 (GAEDDDDDEFG) show a composition bias toward acidic residues. Residues 28–31 (FGEF) carry the WXXF motif 1 motif. At serine 151 the chain carries Phosphoserine. 2 disordered regions span residues 197 to 216 (TDDL…STHS) and 374 to 409 (KTSD…LDDS). Over residues 374 to 389 (KTSDDEVGSPKEESRK) the composition is skewed to basic and acidic residues. The segment at 386–610 (ESRKFTNFQS…EAWQSHRTDE (225 aa)) is interaction with AP1G1. The residue at position 395 (serine 395) is a Phosphoserine. The WXXF motif 2 motif lies at 432–435 (FGDF). Residues 436–438 (GDF) carry the WXXF motif 3 (partial) motif. The WXXF motif 4 motif lies at 478–481 (FGEF). Serine 518 carries the phosphoserine modification. Positions 589–637 (GDQQATESHHRKEAWQSHRTDENIDTPGTPKTHSVPSATSKGAVASGHL) are disordered. Positions 595–610 (ESHHRKEAWQSHRTDE) are enriched in basic and acidic residues. A Phosphothreonine modification is found at threonine 617. Residues 617–628 (TPKTHSVPSATS) are compositionally biased toward polar residues. Residues 716-718 (YQW) carry the CLTCL1/Clathrin-binding motif. The segment at 825–829 (LLNLD) is clathrin-binding.

In terms of assembly, self-associates. Interacts with GGA1 (via GAE domain). Interacts with GGA3 (via GAE domain), AP1G1 (via GAE domain) and AP1G2 (via GAE domain). Component of the aftiphilin/p200/gamma-synergin complex, at least composed of AFTPH/aftiphilin, HEATR5B/p200a and SYNRG/gamma-synergin, which plays a role in the AP1G1/AP-1-mediated protein trafficking from early to recycling endosomes. Within the complex interacts with HEATR5B/p200a and SYNRG/gamma-synergin; the interactions are direct. Interacts with AP1G1/AP-1; the interaction is required to recruit AFTPH/aftiphilin to the perinuclear region of the cell. Interacts with CLTCL1/Clathrin.

It localises to the cytoplasm. It is found in the perinuclear region. The protein resides in the cytoplasmic vesicle. Its subcellular location is the clathrin-coated vesicle. Its function is as follows. Component of clathrin-coated vesicles. Component of the aftiphilin/p200/gamma-synergin complex, which plays roles in AP1G1/AP-1-mediated protein trafficking including the trafficking of transferrin from early to recycling endosomes, and the membrane trafficking of furin and the lysosomal enzyme cathepsin D between the trans-Golgi network (TGN) and endosomes. This Homo sapiens (Human) protein is Aftiphilin (AFTPH).